Consider the following 148-residue polypeptide: Ribonuclease pancreatic (148 aa).

Positions 1-25 (MGLEKSLILFPLLVLVVGWVQPSLG) are cleaved as a signal peptide. Residues lysine 32, arginine 35, 65–69 (KPVNT), lysine 90, and arginine 109 contribute to the substrate site. Disulfide bonds link cysteine 50/cysteine 108, cysteine 64/cysteine 119, cysteine 82/cysteine 134, and cysteine 89/cysteine 96. Histidine 143 serves as the catalytic Proton donor.

Belongs to the pancreatic ribonuclease family. As to quaternary structure, monomer. Interacts with and forms tight 1:1 complexes with RNH1. Dimerization of two such complexes may occur. Interaction with RNH1 inhibits this protein. In terms of tissue distribution, pancreas.

Its subcellular location is the secreted. The enzyme catalyses an [RNA] containing cytidine + H2O = an [RNA]-3'-cytidine-3'-phosphate + a 5'-hydroxy-ribonucleotide-3'-[RNA].. It catalyses the reaction an [RNA] containing uridine + H2O = an [RNA]-3'-uridine-3'-phosphate + a 5'-hydroxy-ribonucleotide-3'-[RNA].. Endonuclease that catalyzes the cleavage of RNA on the 3' side of pyrimidine nucleotides. Acts on single-stranded and double-stranded RNA. The chain is Ribonuclease pancreatic (RNASE1) from Peromyscus leucopus (White-footed mouse).